The primary structure comprises 69 residues: Sodium channel toxin (69 aa).

The region spanning 2 to 66 is the LCN-type CS-alpha/beta domain; the sequence is KNDYPVDTAK…SPTKTSGRCN (65 aa). Intrachain disulfides connect Cys-14–Cys-65, Cys-18–Cys-41, Cys-27–Cys-48, and Cys-31–Cys-50.

It belongs to the long (4 C-C) scorpion toxin superfamily. Sodium channel inhibitor family. As to expression, expressed by the venom gland.

The protein resides in the secreted. Its function is as follows. Inhibits voltage-gated sodium channels (Nav). This chain is Sodium channel toxin, found in Tityus metuendus (Scorpion).